We begin with the raw amino-acid sequence, 183 residues long: Ribulose bisphosphate carboxylase small subunit, chloroplastic (183 aa).

The transit peptide at 1 to 59 (MASSMISSGTVATVSADRPAPAQARMVAPFTGLKSSSASPVTRKSNDITSIASNGGRVQ) directs the protein to the chloroplast.

The protein belongs to the RuBisCO small chain family. In terms of assembly, heterohexadecamer of 8 large and 8 small subunits.

It localises to the plastid. It is found in the chloroplast. Functionally, ruBisCO catalyzes two reactions: the carboxylation of D-ribulose 1,5-bisphosphate, the primary event in carbon dioxide fixation, as well as the oxidative fragmentation of the pentose substrate. Both reactions occur simultaneously and in competition at the same active site. Although the small subunit is not catalytic it is essential for maximal activity. In Malus sp. (Crab apple), this protein is Ribulose bisphosphate carboxylase small subunit, chloroplastic.